The sequence spans 196 residues: Transcriptional regulatory protein UhpA (196 aa).

In terms of domain architecture, Response regulatory spans 3–116 (TVALIDDHLI…ELIAAVHTVA (114 aa)). 4-aspartylphosphate is present on D54. One can recognise an HTH luxR-type domain in the interval 131–196 (ASGRQDPLTK…ELARRMFDGW (66 aa)). The segment at residues 155 to 174 (VKEIAAELGLSPKTVHVHRA) is a DNA-binding region (H-T-H motif).

Post-translationally, phosphorylated and dephosphorylated by UhpB.

It is found in the cytoplasm. Phosphorylation by UhpB enhances DNA binding activity. In terms of biological role, part of the UhpABC signaling cascade that controls the expression of the hexose phosphate transporter UhpT. Activates the transcription of the uhpT gene. Acts by binding specifically to the uhpT promoter region. The protein is Transcriptional regulatory protein UhpA (uhpA) of Escherichia coli (strain K12).